We begin with the raw amino-acid sequence, 98 residues long: U10-barytoxin-Tl1a (98 aa).

Positions 1–21 (MKTLVLVAVLGVASLYLLSSA) are cleaved as a signal peptide. Residues 22–50 (SEVQQLSPAEEEFRAFVSTFGGLFETEER) constitute a propeptide that is removed on maturation. Intrachain disulfides connect C57/C71, C64/C76, and C70/C89.

Belongs to the neurotoxin 10 (Hwtx-1) family. 27 (ICK-3) subfamily. In terms of tissue distribution, expressed by the venom gland.

It is found in the secreted. In terms of biological role, ion channel inhibitor. The protein is U10-barytoxin-Tl1a of Trittame loki (Brush-footed trapdoor spider).